The sequence spans 367 residues: tRNA/tmRNA (uracil-C(5))-methyltransferase (367 aa).

S-adenosyl-L-methionine-binding residues include Gln189, Tyr217, Asn222, Glu238, and Asp298. Cys323 acts as the Nucleophile in catalysis. Residue Glu357 is the Proton acceptor of the active site.

Belongs to the class I-like SAM-binding methyltransferase superfamily. RNA M5U methyltransferase family. TrmA subfamily.

The enzyme catalyses uridine(54) in tRNA + S-adenosyl-L-methionine = 5-methyluridine(54) in tRNA + S-adenosyl-L-homocysteine + H(+). It carries out the reaction uridine(341) in tmRNA + S-adenosyl-L-methionine = 5-methyluridine(341) in tmRNA + S-adenosyl-L-homocysteine + H(+). Dual-specificity methyltransferase that catalyzes the formation of 5-methyluridine at position 54 (m5U54) in all tRNAs, and that of position 341 (m5U341) in tmRNA (transfer-mRNA). This chain is tRNA/tmRNA (uracil-C(5))-methyltransferase, found in Pseudoalteromonas translucida (strain TAC 125).